Here is a 143-residue protein sequence, read N- to C-terminus: Deoxyuridine 5'-triphosphate nucleotidohydrolase (143 aa).

Substrate-binding positions include 63 to 65 (RSG), Asn-76, 80 to 82 (TID), and Lys-90.

It belongs to the dUTPase family. It depends on Mg(2+) as a cofactor.

The catalysed reaction is dUTP + H2O = dUMP + diphosphate + H(+). The protein operates within pyrimidine metabolism; dUMP biosynthesis; dUMP from dCTP (dUTP route): step 2/2. This enzyme is involved in nucleotide metabolism: it produces dUMP, the immediate precursor of thymidine nucleotides and it decreases the intracellular concentration of dUTP so that uracil cannot be incorporated into DNA. The chain is Deoxyuridine 5'-triphosphate nucleotidohydrolase from Clostridioides difficile (Peptoclostridium difficile).